A 459-amino-acid polypeptide reads, in one-letter code: tRNA modification GTPase MnmE (459 aa).

The (6S)-5-formyl-5,6,7,8-tetrahydrofolate site is built by arginine 25, glutamate 87, and arginine 126. Residues 221-380 (GLKVAIVGRP…LETAILEIVQ (160 aa)) form the TrmE-type G domain. Asparagine 231 provides a ligand contact to K(+). Residues 231–236 (NVGKSS), 250–256 (TDLPGTT), and 275–278 (DTAG) each bind GTP. Mg(2+) is bound at residue serine 235. K(+) is bound by residues threonine 250, leucine 252, and threonine 255. Mg(2+) is bound at residue threonine 256. Lysine 459 is a (6S)-5-formyl-5,6,7,8-tetrahydrofolate binding site.

It belongs to the TRAFAC class TrmE-Era-EngA-EngB-Septin-like GTPase superfamily. TrmE GTPase family. Homodimer. Heterotetramer of two MnmE and two MnmG subunits. K(+) serves as cofactor.

Its subcellular location is the cytoplasm. Exhibits a very high intrinsic GTPase hydrolysis rate. Involved in the addition of a carboxymethylaminomethyl (cmnm) group at the wobble position (U34) of certain tRNAs, forming tRNA-cmnm(5)s(2)U34. This is tRNA modification GTPase MnmE from Nostoc sp. (strain PCC 7120 / SAG 25.82 / UTEX 2576).